The following is a 187-amino-acid chain: Putative protein YbeM (187 aa).

One can recognise a CN hydrolase domain in the interval M1–P163.

It belongs to the carbon-nitrogen hydrolase superfamily. NIT1/NIT2 family.

Pseudogene resulting from a nucleotide deletion that introduces a premature stop codon at position 66. This is the C-terminal fragment. The intact protein (AC A0A140NCB4) hydrolyzes deaminated glutathione (dGSH, 2-oxoglutaramate) to alpha-ketoglutarate (alpha-KG) and cysteinylglycine, has less activity against alpha-ketoglutaramate (a-KGM) and no activity on glutathione or L-glutamine. May function as a metabolite repair enzyme. The chain is Putative protein YbeM (ybeM) from Escherichia coli (strain K12).